The primary structure comprises 319 residues: Lipoyl synthase (319 aa).

A disordered region spans residues methionine 1 to serine 28. The segment covering arginine 16–serine 28 has biased composition (basic and acidic residues). [4Fe-4S] cluster is bound by residues cysteine 61, cysteine 66, cysteine 72, cysteine 87, cysteine 91, cysteine 94, and serine 300. Positions tryptophan 73–leucine 289 constitute a Radical SAM core domain.

The protein belongs to the radical SAM superfamily. Lipoyl synthase family. [4Fe-4S] cluster serves as cofactor.

It is found in the cytoplasm. The enzyme catalyses [[Fe-S] cluster scaffold protein carrying a second [4Fe-4S](2+) cluster] + N(6)-octanoyl-L-lysyl-[protein] + 2 oxidized [2Fe-2S]-[ferredoxin] + 2 S-adenosyl-L-methionine + 4 H(+) = [[Fe-S] cluster scaffold protein] + N(6)-[(R)-dihydrolipoyl]-L-lysyl-[protein] + 4 Fe(3+) + 2 hydrogen sulfide + 2 5'-deoxyadenosine + 2 L-methionine + 2 reduced [2Fe-2S]-[ferredoxin]. It functions in the pathway protein modification; protein lipoylation via endogenous pathway; protein N(6)-(lipoyl)lysine from octanoyl-[acyl-carrier-protein]: step 2/2. Functionally, catalyzes the radical-mediated insertion of two sulfur atoms into the C-6 and C-8 positions of the octanoyl moiety bound to the lipoyl domains of lipoate-dependent enzymes, thereby converting the octanoylated domains into lipoylated derivatives. The polypeptide is Lipoyl synthase (Rhodopseudomonas palustris (strain HaA2)).